The sequence spans 185 residues: ATP-dependent protease subunit HslV (185 aa).

Residue Thr13 is part of the active site. Residues Gly167, Cys170, and Thr173 each contribute to the Na(+) site.

The protein belongs to the peptidase T1B family. HslV subfamily. As to quaternary structure, a double ring-shaped homohexamer of HslV is capped on each side by a ring-shaped HslU homohexamer. The assembly of the HslU/HslV complex is dependent on binding of ATP.

Its subcellular location is the cytoplasm. It carries out the reaction ATP-dependent cleavage of peptide bonds with broad specificity.. Its activity is regulated as follows. Allosterically activated by HslU binding. Protease subunit of a proteasome-like degradation complex believed to be a general protein degrading machinery. The polypeptide is ATP-dependent protease subunit HslV (Sinorhizobium fredii (strain NBRC 101917 / NGR234)).